The following is a 217-amino-acid chain: MNIKKKLIYSIISSKDTKEKESEEIVVKLSKQSNKKIYILHRALIHQLSNHRNRNAHTQTRGEVSGGGRKPWKQKGTGRARAGSNRSPLWRGGGVIFGPRHKKYVNKINKKEKQLALRILINNKFKNTIVTENFISKISTPNTKILVNNLKKYNLDTNNNILIIVNEKSNDLYLSTRNLKNVELLAANHLNIVSLLKANHIIINKDALDIINKMYND.

Residues 51 to 85 form a disordered region; it reads HRNRNAHTQTRGEVSGGGRKPWKQKGTGRARAGSN.

This sequence belongs to the universal ribosomal protein uL4 family. Part of the 50S ribosomal subunit.

The protein resides in the plastid. Its subcellular location is the chloroplast. Probably binds the 23S rRNA. In Gracilaria tenuistipitata var. liui (Red alga), this protein is Large ribosomal subunit protein uL4c (rpl4).